The primary structure comprises 259 residues: Glandular kallikrein-10 (259 aa).

The signal sequence occupies residues 1–18 (MWFLILFLALSLGGIDAA). Positions 19–24 (PPGQSR) are cleaved as a propeptide — activation peptide. A Peptidase S1 domain is found at 25 to 256 (IVGGYKCEKN…FTSWIKEVMK (232 aa)). 5 cysteine pairs are disulfide-bonded: cysteine 31-cysteine 171, cysteine 48-cysteine 64, cysteine 150-cysteine 217, cysteine 182-cysteine 196, and cysteine 207-cysteine 232. Histidine 63 functions as the Charge relay system in the catalytic mechanism. N-linked (GlcNAc...) asparagine glycans are attached at residues asparagine 91 and asparagine 106. Aspartate 118 acts as the Charge relay system in catalysis. The active-site Charge relay system is the serine 211.

It belongs to the peptidase S1 family. Kallikrein subfamily. In terms of assembly, heterodimer of a light chain and heavy chain linked by a disulfide bond. Probably N- and O-glycosylated. As to expression, kidney and submandibular gland, where it is found in the granular convoluted tubule and striated duct cells. It is likely that the enzyme is mainly synthesized in the granular convoluted tubules and then transferred to other tissues by release into the vasculature or interstitial space.

It catalyses the reaction Preferential cleavage of Arg-|-Xaa bonds in small molecule substrates. Highly selective action to release kallidin (lysyl-bradykinin) from kininogen involves hydrolysis of Met-|-Xaa or Leu-|-Xaa.. Functionally, glandular kallikreins cleave Met-Lys and Arg-Ser bonds in kininogen to release Lys-bradykinin. This protein may be involved in the regulation of renal function. The protein is Glandular kallikrein-10 (Klk10) of Rattus norvegicus (Rat).